Reading from the N-terminus, the 807-residue chain is Protein FAR1-RELATED SEQUENCE 2 (807 aa).

One can recognise an FAR1 domain in the interval 52–138 (YFYREYARSV…VKEHNHEICP (87 aa)). One can recognise an MULE domain in the interval 219–315 (VVLFDTFYVR…CLWSVLSKIS (97 aa)). The segment at 499 to 535 (FFVALNNELLDACCSCHLFEYQGFLCKHAILVLQSAD) adopts an SWIM-type zinc-finger fold. Residues 660–680 (EDATNRSEELRQETEQVSSRA) are a coiled coil. Residues 788–798 (GSSQFQGSDSS) show a composition bias toward polar residues. The segment at 788 to 807 (GSSQFQGSDSSHPSDHRLSN) is disordered.

This sequence belongs to the FHY3/FAR1 family. Expressed in hypocotyls, rosette and cauline leaves, inflorescences stems, flowers and siliques.

It localises to the nucleus. Its function is as follows. Putative transcription activator involved in regulating light control of development. This is Protein FAR1-RELATED SEQUENCE 2 (FRS2) from Arabidopsis thaliana (Mouse-ear cress).